An 827-amino-acid chain; its full sequence is SID1 transmembrane family member 1 (827 aa).

The signal sequence occupies residues 1 to 19 (MLDCLRLALLCALPWLLRA). Over 20–309 (AVPGHQEEPL…SIKESVYVKS (290 aa)) the chain is Extracellular. N-linked (GlcNAc...) asparagine glycans are attached at residues asparagine 67, asparagine 83, asparagine 136, and asparagine 282. A helical membrane pass occupies residues 310 to 330 (SLFSIFVFLSFYLGCLLVVLV). Topologically, residues 331-442 (HHVRFQRKSI…DRRIVSKKYK (112 aa)) are cytoplasmic. The disordered stretch occupies residues 344–409 (FGSSDGSGNM…VEESDFDTMP (66 aa)). A compositionally biased stretch (low complexity) spans 375–386 (SSSSPGRQMSSS). Positions 398–409 (SSVEESDFDTMP) are enriched in acidic residues. The helical transmembrane segment at 443 to 463 (IYFWNIITIAVFYALPVMQLV) threads the bilayer. Residues 464–494 (ITYQTVVNVTGNQDICYYNFLCAHPLGVLSA) lie on the Extracellular side of the membrane. Asparagine 471 carries N-linked (GlcNAc...) asparagine glycosylation. Residues 495–515 (FNNILSNLGHVLLGFLFLLIV) traverse the membrane as a helical segment. The Cytoplasmic portion of the chain corresponds to 516–541 (LRRDLLHRRALEAKDIFAMEYGIPKH). A helical transmembrane segment spans residues 542–562 (FGLFYAMGIALMMEGVLSACY). Topologically, residues 563–572 (HVCPNYSNFQ) are extracellular. The N-linked (GlcNAc...) asparagine glycan is linked to asparagine 567. Residues 573–590 (FDTSFMYMIAGLCMLKLY) traverse the membrane as a helical segment. Residues 591-600 (QTRHPDINAS) lie on the Cytoplasmic side of the membrane. A helical membrane pass occupies residues 601–621 (AYSAYASFAVVITLTVLGVVF). The Extracellular segment spans residues 622 to 626 (GKNDV). Residues 627-647 (WFWIIFSAIHILSSLALSTQI) form a helical membrane-spanning segment. Topologically, residues 648–683 (YYMGRFKIDLGIFRRAAMVFYTDCIQQCSRPLYMDR) are cytoplasmic. A helical transmembrane segment spans residues 684-704 (MVLLIVGNLVNWSFAFFGLIY). Topologically, residues 705–710 (RPRDFA) are extracellular. Residues 711-731 (SYMLGIFICNLLLYLAFYIIM) traverse the membrane as a helical segment. Residues 732 to 741 (KLRSSEKVLP) are Cytoplasmic-facing. Residues 742-762 (LPVFCIAATAVVWAAALYFFF) traverse the membrane as a helical segment. The Extracellular segment spans residues 763–791 (QNLSSWEGTPAESREKNRECVLLDFFDDH). Asparagine 764 carries N-linked (GlcNAc...) asparagine glycosylation. The helical transmembrane segment at 792 to 812 (DIWHFLSATALFFSFLVLLTL) threads the bilayer. Over 813–827 (DDDLDVVRRDQIPVF) the chain is Cytoplasmic.

It belongs to the SID1 family.

The protein localises to the membrane. In vitro binds long double-stranded RNA (dsRNA) (500 and 700 base pairs), but not dsRNA shorter than 300 bp. Not involved in RNA autophagy, a process in which RNA is directly imported into lysosomes in an ATP-dependent manner, and degraded. This is SID1 transmembrane family member 1 (Sidt1) from Mus musculus (Mouse).